The following is a 449-amino-acid chain: UDP-N-acetylmuramoyl-tripeptide--D-alanyl-D-alanine ligase (449 aa).

Position 106 to 112 (106 to 112 (GSVGKTS)) interacts with ATP.

It belongs to the MurCDEF family. MurF subfamily.

The protein localises to the cytoplasm. The catalysed reaction is D-alanyl-D-alanine + UDP-N-acetyl-alpha-D-muramoyl-L-alanyl-gamma-D-glutamyl-meso-2,6-diaminopimelate + ATP = UDP-N-acetyl-alpha-D-muramoyl-L-alanyl-gamma-D-glutamyl-meso-2,6-diaminopimeloyl-D-alanyl-D-alanine + ADP + phosphate + H(+). It functions in the pathway cell wall biogenesis; peptidoglycan biosynthesis. Its function is as follows. Involved in cell wall formation. Catalyzes the final step in the synthesis of UDP-N-acetylmuramoyl-pentapeptide, the precursor of murein. The chain is UDP-N-acetylmuramoyl-tripeptide--D-alanyl-D-alanine ligase from Rickettsia prowazekii (strain Madrid E).